Here is a 481-residue protein sequence, read N- to C-terminus: ATP synthase subunit beta, plastid (481 aa).

162-169 (GGAGVGKT) provides a ligand contact to ATP.

It belongs to the ATPase alpha/beta chains family. In terms of assembly, F-type ATPases have 2 components, CF(1) - the catalytic core - and CF(0) - the membrane proton channel. CF(1) has five subunits: alpha(3), beta(3), gamma(1), delta(1), epsilon(1). CF(0) has four main subunits: a(1), b(1), b'(1) and c(9-12).

It localises to the plastid membrane. It carries out the reaction ATP + H2O + 4 H(+)(in) = ADP + phosphate + 5 H(+)(out). In terms of biological role, produces ATP from ADP in the presence of a proton gradient across the membrane. The catalytic sites are hosted primarily by the beta subunits. This is ATP synthase subunit beta, plastid (atpB) from Prototheca wickerhamii.